The primary structure comprises 530 residues: Phosphoenolpyruvate carboxykinase (ATP) (530 aa).

Residues arginine 58, tyrosine 195, and lysine 201 each coordinate substrate. Residues lysine 201, histidine 220, and 236–244 each bind ATP; that span reads GLSGTGKTT. Positions 201 and 220 each coordinate Mn(2+). A Mn(2+)-binding site is contributed by aspartate 257. Residues glutamate 285, arginine 321, 440-441, and threonine 446 each bind ATP; that span reads RI. Arginine 321 contacts substrate.

This sequence belongs to the phosphoenolpyruvate carboxykinase (ATP) family. The cofactor is Mn(2+).

The protein localises to the cytoplasm. It catalyses the reaction oxaloacetate + ATP = phosphoenolpyruvate + ADP + CO2. The protein operates within carbohydrate biosynthesis; gluconeogenesis. In terms of biological role, involved in the gluconeogenesis. Catalyzes the conversion of oxaloacetate (OAA) to phosphoenolpyruvate (PEP) through direct phosphoryl transfer between the nucleoside triphosphate and OAA. The chain is Phosphoenolpyruvate carboxykinase (ATP) from Staphylococcus aureus (strain MSSA476).